Consider the following 877-residue polypeptide: Telomere length regulation protein clk-2 (877 aa).

Residues 488-501 (NKDSAAITSKNNLR) are compositionally biased toward polar residues. The segment at 488 to 509 (NKDSAAITSKNNLRLDSDDDED) is disordered.

It belongs to the TEL2 family.

The protein localises to the nucleus. The protein resides in the chromosome. It localises to the telomere. In terms of biological role, DNA damage checkpoint protein required for DNA damage-induced cell cycle arrest and apoptosis, thereby playing a role in genome stability. Regulator of telomere length. This Caenorhabditis elegans protein is Telomere length regulation protein clk-2 (clk-2).